Consider the following 79-residue polypeptide: Putative membrane protein insertion efficiency factor (79 aa).

This sequence belongs to the UPF0161 family.

The protein resides in the cell inner membrane. Its function is as follows. Could be involved in insertion of integral membrane proteins into the membrane. This Cytophaga hutchinsonii (strain ATCC 33406 / DSM 1761 / CIP 103989 / NBRC 15051 / NCIMB 9469 / D465) protein is Putative membrane protein insertion efficiency factor.